The primary structure comprises 318 residues: Homoserine kinase (318 aa).

Residue 97-107 participates in ATP binding; it reads PIGSGLGSSAC.

It belongs to the GHMP kinase family. Homoserine kinase subfamily.

The protein localises to the cytoplasm. The enzyme catalyses L-homoserine + ATP = O-phospho-L-homoserine + ADP + H(+). It functions in the pathway amino-acid biosynthesis; L-threonine biosynthesis; L-threonine from L-aspartate: step 4/5. Catalyzes the ATP-dependent phosphorylation of L-homoserine to L-homoserine phosphate. This chain is Homoserine kinase, found in Aliivibrio salmonicida (strain LFI1238) (Vibrio salmonicida (strain LFI1238)).